The primary structure comprises 237 residues: MARSMTSLVAVVPAAGVGSRMKADRPKQYLQIHGKTILEHTIERLLSHPAITQVVVAVSEDDPYYSDLAIAQHPDIIRVAGGKERADSVLSALCFLSQQPQKTDWVLVHDAARPCVAHQDIDALIERCSSHETGGILATPVRDTMKRANAQQMIDHTVDRNALWHALTPQMFKAEVLTDALSDALAQGVAITDEASALEWRGALPALVQGCSSNIKVTQPEDLALAEFYLSREKDRK.

This sequence belongs to the IspD/TarI cytidylyltransferase family. IspD subfamily.

It carries out the reaction 2-C-methyl-D-erythritol 4-phosphate + CTP + H(+) = 4-CDP-2-C-methyl-D-erythritol + diphosphate. Its pathway is isoprenoid biosynthesis; isopentenyl diphosphate biosynthesis via DXP pathway; isopentenyl diphosphate from 1-deoxy-D-xylulose 5-phosphate: step 2/6. Functionally, catalyzes the formation of 4-diphosphocytidyl-2-C-methyl-D-erythritol from CTP and 2-C-methyl-D-erythritol 4-phosphate (MEP). This chain is 2-C-methyl-D-erythritol 4-phosphate cytidylyltransferase, found in Vibrio vulnificus (strain YJ016).